The chain runs to 212 residues: Transmembrane protein 186 (212 aa).

At methionine 1–threonine 78 the chain is on the mitochondrial matrix side. A helical membrane pass occupies residues alanine 79–phenylalanine 99. Over serine 100–serine 101 the chain is Mitochondrial intermembrane. The chain crosses the membrane as a helical span at residues leucine 102 to phenylalanine 122. The Mitochondrial matrix segment spans residues phenylalanine 123–lysine 212.

It belongs to the TMEM186 family. In terms of assembly, part of the mitochondrial complex I assembly/MCIA complex that comprises at least the core subunits TMEM126B, NDUFAF1, ECSIT and ACAD9 and complement subunits such as COA1 and TMEM186. Interacts with MT-ND3.

The protein resides in the mitochondrion inner membrane. In terms of biological role, as part of the MCIA complex, required for efficient assembly of the mitochondrial complex I. The chain is Transmembrane protein 186 from Bos taurus (Bovine).